A 354-amino-acid chain; its full sequence is Protein-glutamate methylesterase/protein-glutamine glutaminase of group 3 operon (354 aa).

Residues 3–121 enclose the Response regulatory domain; it reads RILLATSTVE…MQLEQPAIEK (119 aa). A CheB-type methylesterase domain is found at 158–340; the sequence is PIGIVGIAAS…LESIAENITA (183 aa). Catalysis depends on residues S167, H194, and D287.

The protein belongs to the CheB family.

The protein resides in the cytoplasm. The enzyme catalyses [protein]-L-glutamate 5-O-methyl ester + H2O = L-glutamyl-[protein] + methanol + H(+). It catalyses the reaction L-glutaminyl-[protein] + H2O = L-glutamyl-[protein] + NH4(+). Involved in chemotaxis. Part of a chemotaxis signal transduction system that modulates chemotaxis in response to various stimuli. Catalyzes the demethylation of specific methylglutamate residues introduced into the chemoreceptors (methyl-accepting chemotaxis proteins or MCP) by CheR. Also mediates the irreversible deamidation of specific glutamine residues to glutamic acid. This is Protein-glutamate methylesterase/protein-glutamine glutaminase of group 3 operon from Rhizobium meliloti (strain 1021) (Ensifer meliloti).